The following is a 312-amino-acid chain: Pyridoxal kinase (312 aa).

N-acetylmethionine is present on methionine 1. Pyridoxal is bound by residues serine 12 and threonine 47. Pyridoxal 5'-phosphate is bound at residue threonine 47. Phosphoserine is present on serine 59. ATP is bound at residue aspartate 113. A Na(+)-binding site is contributed by aspartate 113. Position 118 (aspartate 118) interacts with Mg(2+). Threonine 148 provides a ligand contact to Na(+). ATP is bound at residue 150-153 (NQFE). Serine 164 carries the post-translational modification Phosphoserine. Threonine 186 is a binding site for Na(+). 186-187 (TS) provides a ligand contact to ATP. Position 213 is a phosphoserine (serine 213). Residues 226 to 228 (VDA) and threonine 233 each bind ATP. Position 234 to 235 (234 to 235 (GD)) interacts with pyridoxal 5'-phosphate. Aspartate 235 (proton acceptor) is an active-site residue. Serine 285 carries the post-translational modification Phosphoserine.

It belongs to the pyridoxine kinase family. As to quaternary structure, homodimer. Requires Mg(2+) as cofactor. The cofactor is Zn(2+). Co(2+) serves as cofactor. It depends on Mn(2+) as a cofactor. Ubiquitous. Highly expressed in testis. As to expression, in adult testis and spermatozoa.

It localises to the cytoplasm. The protein localises to the cytosol. The catalysed reaction is pyridoxal + ATP = pyridoxal 5'-phosphate + ADP + H(+). The enzyme catalyses pyridoxamine + ATP = pyridoxamine 5'-phosphate + ADP + H(+). It carries out the reaction pyridoxine + ATP = pyridoxine 5'-phosphate + ADP + H(+). It functions in the pathway cofactor metabolism; pyridoxal 5'-phosphate salvage; pyridoxal 5'-phosphate from pyridoxal: step 1/1. It participates in cofactor metabolism; pyridoxal 5'-phosphate salvage; pyridoxine 5'-phosphate from pyridoxine: step 1/1. Its pathway is cofactor metabolism; pyridoxal 5'-phosphate salvage; pyridoxamine 5'-phosphate from pyridoxamine: step 1/1. Its activity is regulated as follows. Catalytic activity is inhibited competitively by 4-deoxypyridoxine, and is also inhibited by the benzodiazepine receptor ligands 1012S and ethyl-beta-carboline-3-carboxylate. Inhibited by ginkgotoxin, theophylline, lamotrigine, enprofylline, theobromine, and caffeine. Activity is increased in the presence of K(+)or Na(+). In terms of biological role, catalyzes the phosphorylation of the dietary vitamin B6 vitamers pyridoxal (PL), pyridoxine (PN) and pyridoxamine (PM) to form pyridoxal 5'-phosphate (PLP), pyridoxine 5'-phosphate (PNP) and pyridoxamine 5'-phosphate (PMP), respectively. PLP is the active form of vitamin B6, and acts as a cofactor for over 140 different enzymatic reactions. The sequence is that of Pyridoxal kinase from Homo sapiens (Human).